The chain runs to 528 residues: Proteinaceous RNase P 2 (528 aa).

Positions M1–S16 are enriched in basic and acidic residues. The interval M1–N28 is disordered. 4 PPR repeats span residues P29–L64, L72–P107, N108–S142, and R145–L179. Residues V275–C511 form the PRORP domain. Zn(2+) is bound by residues C281 and C284. Residues D343, D421, D422, and D440 each contribute to the Mg(2+) site. 2 residues coordinate Zn(2+): H494 and C511.

This sequence belongs to the PPR family. P subfamily. As to quaternary structure, monomer; forms dimers in crystallo but monomers in solution. Mg(2+) is required as a cofactor.

It localises to the nucleus. The catalysed reaction is Endonucleolytic cleavage of RNA, removing 5'-extranucleotides from tRNA precursor.. Functionally, endonuclease RNase P responsible for the 5' maturation of tRNA precursors. Preferentially binds precursor tRNAs containing short 5' leaders and 3' trailers. Also involved in the maturation of mRNA and small nucleolar RNA (snoRNA). In Arabidopsis thaliana (Mouse-ear cress), this protein is Proteinaceous RNase P 2 (PRORP2).